Here is a 461-residue protein sequence, read N- to C-terminus: METLFNGTLALAGRDQETTGFAWWAGNARLINLSGKLLGAHVAHAGLIVFWAGAMNLFEVAHFVPEKPMYEQGLILLPHLATLGWGVGPGGEVIDTFPYFVSGVLHLISSAVLGFGGIYHALLGPETLEESFPFFGYVWKDRNKMTTILGIHLILLGIGAFLLVFKALYFGGVYDTWAPGGGDVRKITNLTLSPSVIFGYLLKSPFGGEGWIVSVDDLEDIIGGHVWLGSICIFGGIWHILTKPFAWARRALVWSGEAYLSYSLGALSVFGFIACCFVWFNNTAYPSEFYGPTGPEASQAQAFTFLVRDQRLGANVGSAQGPTGLGKYLMRSPTGEVIFGGETMRFWDLRAPWLEPLRGPNGLDLSRLKKDIQPWQERRSAEYMTHAPLGSLNSVGGVATEINAVNYVSPRSWLATSHFVLGFFLFVGHLWHAGRARAAAAGFEKGIDRDFEPVLSMTPLN.

Positions 1-2 (ME) are excised as a propeptide. N-acetylthreonine is present on Thr-3. Phosphothreonine is present on Thr-3. 5 consecutive transmembrane segments (helical) span residues 57-81 (LFEV…PHLA), 122-143 (LLGP…KDRN), 166-188 (KALY…RKIT), 243-263 (KPFA…LSYS), and 279-300 (WFNN…ASQA). Glu-355 lines the [CaMn4O5] cluster pocket. Residues 435–459 (RARAAAAGFEKGIDRDFEPVLSMTP) form a helical membrane-spanning segment.

It belongs to the PsbB/PsbC family. PsbC subfamily. In terms of assembly, PSII is composed of 1 copy each of membrane proteins PsbA, PsbB, PsbC, PsbD, PsbE, PsbF, PsbH, PsbI, PsbJ, PsbK, PsbL, PsbM, PsbT, PsbX, PsbY, PsbZ, Psb30/Ycf12, at least 3 peripheral proteins of the oxygen-evolving complex and a large number of cofactors. It forms dimeric complexes. It depends on Binds multiple chlorophylls and provides some of the ligands for the Ca-4Mn-5O cluster of the oxygen-evolving complex. It may also provide a ligand for a Cl- that is required for oxygen evolution. PSII binds additional chlorophylls, carotenoids and specific lipids. as a cofactor.

Its subcellular location is the plastid. It localises to the chloroplast thylakoid membrane. One of the components of the core complex of photosystem II (PSII). It binds chlorophyll and helps catalyze the primary light-induced photochemical processes of PSII. PSII is a light-driven water:plastoquinone oxidoreductase, using light energy to abstract electrons from H(2)O, generating O(2) and a proton gradient subsequently used for ATP formation. This chain is Photosystem II CP43 reaction center protein, found in Gossypium barbadense (Sea Island cotton).